A 2282-amino-acid polypeptide reads, in one-letter code: Cation channel sperm-associated targeting subunit tau (2282 aa).

Positions methionine 1 to arginine 118 are disordered. 2 stretches are compositionally biased toward polar residues: residues valine 11–arginine 41 and methionine 50–serine 87. Positions tyrosine 90 to arginine 109 are enriched in basic and acidic residues. Residues glutamine 131–methionine 266 form the C2 domain. Disordered regions lie at residues methionine 397 to leucine 416, glutamate 656 to glutamate 679, asparagine 747 to proline 1066, serine 1104 to serine 1153, tyrosine 1217 to arginine 1240, asparagine 1426 to serine 1445, arginine 1452 to lysine 1515, glutamate 1542 to threonine 1569, asparagine 1908 to glutamine 1928, and proline 2187 to lysine 2222. 5 stretches are compositionally biased toward polar residues: residues isoleucine 750–proline 760, serine 783–proline 792, aspartate 800–asparagine 841, isoleucine 849–asparagine 858, and serine 953–serine 974. Residues serine 1104–serine 1123 are compositionally biased toward low complexity. A compositionally biased stretch (polar residues) spans aspartate 1124–lysine 1136. 2 stretches are compositionally biased toward polar residues: residues arginine 1452–serine 1466 and aspartate 1473–serine 1482. Residues tyrosine 1484–serine 1493 are compositionally biased toward basic and acidic residues. A compositionally biased stretch (acidic residues) spans asparagine 1495–serine 1504. Composition is skewed to basic and acidic residues over residues glutamate 1542–isoleucine 1555 and serine 1916–leucine 1925.

In terms of assembly, component of the CatSper complex or CatSpermasome composed of the core pore-forming members CATSPER1, CATSPER2, CATSPER3 and CATSPER4 as well as auxiliary members CATSPERB, CATSPERG, CATSPERD, CATSPERE, CATSPERZ, C2CD6/CATSPERT, SLCO6C1, TMEM249, TMEM262 and EFCAB9. HSPA1 may be an additional auxiliary complex member. The core complex members CATSPER1, CATSPER2, CATSPER3 and CATSPER4 form a heterotetrameric channel. The auxiliary CATSPERB, CATSPERG, CATSPERD and CATSPERE subunits form a pavilion-like structure over the pore which stabilizes the complex through interactions with CATSPER4, CATSPER3, CATSPER1 and CATSPER2 respectively. SLCO6C1 interacts with CATSPERE and TMEM262/CATSPERH interacts with CATSPERB, further stabilizing the complex. C2CD6/CATSPERT interacts at least with CATSPERD and is required for targeting the CatSper complex in the flagellar membrane. Expressed in cauda sperm (at protein level).

It localises to the cell projection. It is found in the cilium. Its subcellular location is the flagellum membrane. Auxiliary component of the CatSper complex, a complex involved in sperm cell hyperactivation. Sperm cell hyperactivation is needed for sperm motility which is essential late in the preparation of sperm for fertilization. Required for CatSper complex targeting and trafficking into the quadrilinear nanodomains. Targets the preassembled CatSper complexes to elongating flagella, where it links the channel-carrying vesicles and motor proteins. The polypeptide is Cation channel sperm-associated targeting subunit tau (Mus musculus (Mouse)).